The chain runs to 141 residues: Large ribosomal subunit protein uL11 (141 aa).

This sequence belongs to the universal ribosomal protein uL11 family. In terms of assembly, part of the ribosomal stalk of the 50S ribosomal subunit. Interacts with L10 and the large rRNA to form the base of the stalk. L10 forms an elongated spine to which L12 dimers bind in a sequential fashion forming a multimeric L10(L12)X complex. In terms of processing, one or more lysine residues are methylated.

Functionally, forms part of the ribosomal stalk which helps the ribosome interact with GTP-bound translation factors. This Pediococcus pentosaceus (strain ATCC 25745 / CCUG 21536 / LMG 10740 / 183-1w) protein is Large ribosomal subunit protein uL11.